Reading from the N-terminus, the 569-residue chain is Probable ABC transporter permease protein y4fN (569 aa).

13 helical membrane passes run 10–30, 68–88, 98–118, 121–141, 145–165, 196–216, 247–267, 304–324, 363–383, 395–415, 426–446, 480–500, and 534–554; these read VFYW…LLVP, VWMT…QVAV, GFLK…AAAG, FTYG…PSLP, FIGW…FHFL, VVLP…LITA, PDMA…LILL, LAYL…LFSF, MSSI…PIMV, ICFV…LIVA, LVLL…SLPL, VVLP…FNNL, and AAVS…VILI. The ABC transmembrane type-1 1 domain maps to 64-268; the sequence is LWNTVWMTAA…LVLMGLILLS (205 aa). An ABC transmembrane type-1 2 domain is found at 357–551; it reads FFNSMLMSSI…TLIMAFSLAV (195 aa).

The protein belongs to the binding-protein-dependent transport system permease family. CysTW subfamily.

The protein localises to the cell inner membrane. In terms of biological role, probably part of the binding-protein-dependent transport system y4fNOP. Probably responsible for the translocation of the substrate across the membrane. The chain is Probable ABC transporter permease protein y4fN from Sinorhizobium fredii (strain NBRC 101917 / NGR234).